The chain runs to 436 residues: Gamma-glutamyl phosphate reductase (436 aa).

Belongs to the gamma-glutamyl phosphate reductase family.

The protein resides in the cytoplasm. It catalyses the reaction L-glutamate 5-semialdehyde + phosphate + NADP(+) = L-glutamyl 5-phosphate + NADPH + H(+). The protein operates within amino-acid biosynthesis; L-proline biosynthesis; L-glutamate 5-semialdehyde from L-glutamate: step 2/2. Catalyzes the NADPH-dependent reduction of L-glutamate 5-phosphate into L-glutamate 5-semialdehyde and phosphate. The product spontaneously undergoes cyclization to form 1-pyrroline-5-carboxylate. The sequence is that of Gamma-glutamyl phosphate reductase from Polaromonas sp. (strain JS666 / ATCC BAA-500).